The primary structure comprises 650 residues: ATP-dependent DNA helicase PIF1 (650 aa).

The interval 14 to 192 is PINT; sequence MPSSTEAATD…ALEKRPMESQ (179 aa). Residues serine 40 and serine 164 each carry the phosphoserine modification. Residues 171–199 are disordered; that stretch reads LQRAAATKAPDSALEKRPMESQTSTEAPR. 237–244 contributes to the ATP binding site; it reads GSAGTGKS. Residues 586-605 mediate DNA binding; that stretch reads QAYVALSRARSLQGLRVLDF. Residues 631–650 are disordered; it reads LESQDDEEANSDLENMDPNL. Positions 633 to 650 are enriched in acidic residues; that stretch reads SQDDEEANSDLENMDPNL.

Belongs to the helicase family. PIF1 subfamily. Monomer. Interacts with telomerase. The cofactor is Mg(2+).

It is found in the nucleus. It localises to the mitochondrion. The enzyme catalyses Couples ATP hydrolysis with the unwinding of duplex DNA at the replication fork by translocating in the 5'-3' direction. This creates two antiparallel DNA single strands (ssDNA). The leading ssDNA polymer is the template for DNA polymerase III holoenzyme which synthesizes a continuous strand.. The catalysed reaction is ATP + H2O = ADP + phosphate + H(+). Its function is as follows. DNA-dependent ATPase and 5'-3' DNA helicase required for the maintenance of both mitochondrial and nuclear genome stability. Efficiently unwinds G-quadruplex (G4) DNA structures and forked RNA-DNA hybrids. Resolves G4 structures, preventing replication pausing and double-strand breaks (DSBs) at G4 motifs. Involved in the maintenance of telomeric DNA. Inhibits telomere elongation, de novo telomere formation and telomere addition to DSBs via catalytic inhibition of telomerase. Reduces the processivity of telomerase by displacing active telomerase from DNA ends. Releases telomerase by unwinding the short telomerase RNA/telomeric DNA hybrid that is the intermediate in the telomerase reaction. Possesses an intrinsic strand annealing activity. This chain is ATP-dependent DNA helicase PIF1, found in Mus musculus (Mouse).